The sequence spans 239 residues: 2',3'-cyclic-nucleotide 3'-phosphodiesterase (239 aa).

Active-site proton donor/acceptor residues include H39 and H150.

Belongs to the 2H phosphoesterase superfamily. CPD1 family.

The protein resides in the golgi apparatus. It catalyses the reaction ADP-alpha-D-ribose 1'',2''-cyclic phosphate + H2O = ADP-alpha-D-ribose 1''-phosphate + H(+). The catalysed reaction is 2',3'-cyclophospho-AMP + H2O = adenosine 2'-phosphate + H(+). The enzyme catalyses 2',3'-cyclophospho-GMP + H2O = guanosine 2'-phosphate + H(+). It carries out the reaction 2',3'-cyclophospho-UMP + H2O = uridine 2'-phosphate + H(+). It catalyses the reaction 2',3'-cyclophospho-CMP + H2O = cytidine 2'-phosphate + H(+). The catalysed reaction is a nucleoside 2',3'-cyclic phosphate + H2O = a nucleoside 2'-phosphate + H(+). Its function is as follows. Involved in the metabolism of ADP-ribose 1',2'-cyclic phosphate which is produced as a consequence of tRNA splicing. This chain is 2',3'-cyclic-nucleotide 3'-phosphodiesterase, found in Saccharomyces cerevisiae (strain ATCC 204508 / S288c) (Baker's yeast).